The following is a 308-amino-acid chain: Phosphoribosylaminoimidazole-succinocarboxamide synthase (308 aa).

This sequence belongs to the SAICAR synthetase family.

It carries out the reaction 5-amino-1-(5-phospho-D-ribosyl)imidazole-4-carboxylate + L-aspartate + ATP = (2S)-2-[5-amino-1-(5-phospho-beta-D-ribosyl)imidazole-4-carboxamido]succinate + ADP + phosphate + 2 H(+). Its pathway is purine metabolism; IMP biosynthesis via de novo pathway; 5-amino-1-(5-phospho-D-ribosyl)imidazole-4-carboxamide from 5-amino-1-(5-phospho-D-ribosyl)imidazole-4-carboxylate: step 1/2. This Xylella fastidiosa (strain 9a5c) protein is Phosphoribosylaminoimidazole-succinocarboxamide synthase.